The following is a 94-amino-acid chain: MTLFSSISSISNPMTSSKSSIASFGSGTSMGSNSIACGGGCGGGSGGILGLGLGLGLNLFGGSRGACGGNSGSGNPGNGPCSGGKCCGGPCCGI.

A disordered region spans residues 1 to 20; it reads MTLFSSISSISNPMTSSKSS.

It belongs to the hssA/B family.

This chain is HssA/B-like protein 49 (hssl49), found in Dictyostelium discoideum (Social amoeba).